Here is a 325-residue protein sequence, read N- to C-terminus: Beta-ketoacyl-[acyl-carrier-protein] synthase III (325 aa).

Residues Cys-116 and His-252 contribute to the active site. The tract at residues Gln-253–Arg-257 is ACP-binding. Asn-282 is a catalytic residue.

It belongs to the thiolase-like superfamily. FabH family. Homodimer.

It localises to the cytoplasm. The catalysed reaction is malonyl-[ACP] + acetyl-CoA + H(+) = 3-oxobutanoyl-[ACP] + CO2 + CoA. It participates in lipid metabolism; fatty acid biosynthesis. Functionally, catalyzes the condensation reaction of fatty acid synthesis by the addition to an acyl acceptor of two carbons from malonyl-ACP. Catalyzes the first condensation reaction which initiates fatty acid synthesis and may therefore play a role in governing the total rate of fatty acid production. Possesses both acetoacetyl-ACP synthase and acetyl transacylase activities. Its substrate specificity determines the biosynthesis of branched-chain and/or straight-chain of fatty acids. This Xanthomonas campestris pv. campestris (strain ATCC 33913 / DSM 3586 / NCPPB 528 / LMG 568 / P 25) protein is Beta-ketoacyl-[acyl-carrier-protein] synthase III.